The following is a 102-amino-acid chain: Large ribosomal subunit protein bL21 (102 aa).

Basic residues predominate over residues 79 to 91; sequence RKDSKRKKGHRQP. Residues 79–102 form a disordered region; sequence RKDSKRKKGHRQPYTKLTIDKINA.

The protein belongs to the bacterial ribosomal protein bL21 family. As to quaternary structure, part of the 50S ribosomal subunit. Contacts protein L20.

In terms of biological role, this protein binds to 23S rRNA in the presence of protein L20. In Staphylococcus epidermidis (strain ATCC 35984 / DSM 28319 / BCRC 17069 / CCUG 31568 / BM 3577 / RP62A), this protein is Large ribosomal subunit protein bL21.